The primary structure comprises 123 residues: Large ribosomal subunit protein uL24 (123 aa).

The protein belongs to the universal ribosomal protein uL24 family. Part of the 50S ribosomal subunit.

In terms of biological role, one of two assembly initiator proteins, it binds directly to the 5'-end of the 23S rRNA, where it nucleates assembly of the 50S subunit. Its function is as follows. One of the proteins that surrounds the polypeptide exit tunnel on the outside of the subunit. The sequence is that of Large ribosomal subunit protein uL24 from Kineococcus radiotolerans (strain ATCC BAA-149 / DSM 14245 / SRS30216).